A 330-amino-acid chain; its full sequence is Phosphate acyltransferase (330 aa).

It belongs to the PlsX family. Homodimer. Probably interacts with PlsY.

It is found in the cytoplasm. The enzyme catalyses a fatty acyl-[ACP] + phosphate = an acyl phosphate + holo-[ACP]. The protein operates within lipid metabolism; phospholipid metabolism. Functionally, catalyzes the reversible formation of acyl-phosphate (acyl-PO(4)) from acyl-[acyl-carrier-protein] (acyl-ACP). This enzyme utilizes acyl-ACP as fatty acyl donor, but not acyl-CoA. The protein is Phosphate acyltransferase of Lysinibacillus sphaericus (strain C3-41).